Consider the following 380-residue polypeptide: uncharacterized protein (380 aa).

Residues 251–275 (NMSERPPTPSHDTASSSTSTDPNPL) form a disordered region. The segment covering 260–272 (SHDTASSSTSTDP) has biased composition (low complexity).

This is an uncharacterized protein from Allium cepa var. aggregatum (Shallot).